The chain runs to 584 residues: Chaperonin GroEL 1 (584 aa).

ATP is bound by residues 29-32 (TIGP), 86-90 (DGTTT), Gly413, and Asp492. The segment at 523–542 (EPEAAAPGGPGGDPMGGMGG) is disordered. Residues 530–542 (GGPGGDPMGGMGG) are compositionally biased toward gly residues.

It belongs to the chaperonin (HSP60) family. As to quaternary structure, forms a cylinder of 14 subunits composed of two heptameric rings stacked back-to-back. Interacts with the co-chaperonin GroES.

It localises to the cytoplasm. The catalysed reaction is ATP + H2O + a folded polypeptide = ADP + phosphate + an unfolded polypeptide.. Its function is as follows. Together with its co-chaperonin GroES, plays an essential role in assisting protein folding. The GroEL-GroES system forms a nano-cage that allows encapsulation of the non-native substrate proteins and provides a physical environment optimized to promote and accelerate protein folding. This chain is Chaperonin GroEL 1, found in Prochlorococcus marinus (strain MIT 9312).